The primary structure comprises 518 residues: Membrane-bound lytic murein transglycosylase F (518 aa).

An N-terminal signal peptide occupies residues 1 to 21 (MKKLKINYLFIGILALLLAVA). Residues 22-269 (LWPSIPWFGK…RIEEKYLGHG (248 aa)) are non-LT domain. The LT domain stretch occupies residues 270 to 518 (DDFDYVDTRT…SRKGSEEKQN (249 aa)). The active site involves Glu314.

In the N-terminal section; belongs to the bacterial solute-binding protein 3 family. It in the C-terminal section; belongs to the transglycosylase Slt family.

Its subcellular location is the cell outer membrane. It catalyses the reaction Exolytic cleavage of the (1-&gt;4)-beta-glycosidic linkage between N-acetylmuramic acid (MurNAc) and N-acetylglucosamine (GlcNAc) residues in peptidoglycan, from either the reducing or the non-reducing ends of the peptidoglycan chains, with concomitant formation of a 1,6-anhydrobond in the MurNAc residue.. Murein-degrading enzyme that degrades murein glycan strands and insoluble, high-molecular weight murein sacculi, with the concomitant formation of a 1,6-anhydromuramoyl product. Lytic transglycosylases (LTs) play an integral role in the metabolism of the peptidoglycan (PG) sacculus. Their lytic action creates space within the PG sacculus to allow for its expansion as well as for the insertion of various structures such as secretion systems and flagella. This chain is Membrane-bound lytic murein transglycosylase F, found in Escherichia coli O157:H7.